Reading from the N-terminus, the 75-residue chain is U14-hexatoxin-Mg1a (75 aa).

An N-terminal signal peptide occupies residues 1–19; the sequence is MKLTLFILIVFVVLANVYA. A propeptide spanning residues 20-31 is cleaved from the precursor; sequence AGISERNIIGGR.

Post-translationally, contains 4 disulfide bonds. In terms of tissue distribution, expressed by the venom gland.

The protein localises to the secreted. No toxicity is observed upon intracranial injection into mice and intrathorax injection into crickets. This is U14-hexatoxin-Mg1a from Macrothele gigas (Japanese funnel web spider).